The sequence spans 61 residues: Large ribosomal subunit protein bL28 (61 aa).

It belongs to the bacterial ribosomal protein bL28 family.

The chain is Large ribosomal subunit protein bL28 from Lachnospira eligens (strain ATCC 27750 / DSM 3376 / VPI C15-48 / C15-B4) (Eubacterium eligens).